Consider the following 248-residue polypeptide: PF03932 family protein CutC (248 aa).

The protein belongs to the CutC family. In terms of assembly, homodimer.

It is found in the cytoplasm. The polypeptide is PF03932 family protein CutC (Salmonella paratyphi B (strain ATCC BAA-1250 / SPB7)).